The primary structure comprises 492 residues: MSTPAKELCRLGLREAGAGVAAKAISSSELVEASLARIQATDGKLGAFLAVSADRARAAARAADARAARGERRSELDGVPVAVKDIFVTKGVPTTAGSRILEGYLPPYDATVVERLEAAGAVIVGKLNMDEFAMGSSNENSAYKPCHNPWDLSRTPGGSSGGSAASVAAGQVHASLGTDTGGSIREPAAFCGVVGVKPTYGRVSRYGVVAFASSLDQVGPLAREVGDAALVLRTIAGHDPRDMTSSTRPVDDYLAPLEDGARGLRVGVPREWLSGGLDAGVEAAVRAALDTYRRLGATLVDVSLPHSKYGIGAYYLIAPAEASSNLARYDGVRFGLRAADAKGLKEMYAESRERGLGAEPKRRIMLGTYALSSGYYDAYYLRAQKVRTLIRRDFDEAFRGCDVIAGPVTPSVAFKLGERTGDPLQMYLADIFTITCNLAALPGLSVPCGLEAASGLPVGLQLVGRPFDEATLFRAARALERELGPLPAPPEP.

Active-site charge relay system residues include Lys84 and Ser159. Catalysis depends on Ser183, which acts as the Acyl-ester intermediate.

The protein belongs to the amidase family. GatA subfamily. As to quaternary structure, heterotrimer of A, B and C subunits.

The enzyme catalyses L-glutamyl-tRNA(Gln) + L-glutamine + ATP + H2O = L-glutaminyl-tRNA(Gln) + L-glutamate + ADP + phosphate + H(+). Allows the formation of correctly charged Gln-tRNA(Gln) through the transamidation of misacylated Glu-tRNA(Gln) in organisms which lack glutaminyl-tRNA synthetase. The reaction takes place in the presence of glutamine and ATP through an activated gamma-phospho-Glu-tRNA(Gln). This chain is Glutamyl-tRNA(Gln) amidotransferase subunit A, found in Anaeromyxobacter sp. (strain K).